We begin with the raw amino-acid sequence, 472 residues long: Trigger factor (472 aa).

The PPIase FKBP-type domain occupies Gly174–Pro261. Positions Glu438 to Ser472 are disordered. Positions Lys439–Lys451 are enriched in basic and acidic residues.

Belongs to the FKBP-type PPIase family. Tig subfamily.

The protein resides in the cytoplasm. The enzyme catalyses [protein]-peptidylproline (omega=180) = [protein]-peptidylproline (omega=0). Involved in protein export. Acts as a chaperone by maintaining the newly synthesized protein in an open conformation. Functions as a peptidyl-prolyl cis-trans isomerase. In Prochlorococcus marinus (strain NATL2A), this protein is Trigger factor.